Reading from the N-terminus, the 512-residue chain is Maturase K (512 aa).

The protein belongs to the intron maturase 2 family. MatK subfamily.

The protein resides in the plastid. The protein localises to the chloroplast. Usually encoded in the trnK tRNA gene intron. Probably assists in splicing its own and other chloroplast group II introns. This Oenothera parviflora (Small-flowered evening primrose) protein is Maturase K.